We begin with the raw amino-acid sequence, 833 residues long: Ribosome biogenesis protein BOP1 homolog (833 aa).

The disordered stretch occupies residues 20 to 202; the sequence is NKKSEPIAVS…DSDDSSEDES (183 aa). The span at 36–56 shows a compositional bias: low complexity; it reads SKPTTTATTTVSKSPVSTITT. Composition is skewed to acidic residues over residues 90-111 and 136-150; these read SEDD…EDVE and EAEE…EDDS. Over residues 154 to 170 the composition is skewed to low complexity; the sequence is SSKSSSSTTTTTTTTKK. Positions 182-192 are enriched in polar residues; sequence KQWTNDPNQFY. Positions 193-202 are enriched in acidic residues; it reads DSDDSSEDES. 3 WD repeats span residues 331–370, 488–527, and 529–569; these read TKAI…KEKT, GHKA…CLYS, and EVES…TQTE. The interval 568-592 is disordered; sequence TEHSPETEKILTKPPTDSSTEQQQN. The span at 582–592 shows a compositional bias: polar residues; that stretch reads PTDSSTEQQQN. WD repeat units follow at residues 618-660, 663-701, 704-743, 747-786, and 802-833; these read HHPF…TQSP, KSKT…LIKK, TGCR…RPYK, YHKM…DLLQ, and INDL…LYTN.

This sequence belongs to the WD repeat BOP1/ERB1 family.

It localises to the nucleus. Its subcellular location is the nucleolus. It is found in the nucleoplasm. Functionally, required for maturation of ribosomal RNAs and formation of the large ribosomal subunit. In Dictyostelium discoideum (Social amoeba), this protein is Ribosome biogenesis protein BOP1 homolog.